Here is a 90-residue protein sequence, read N- to C-terminus: Probable Fe(2+)-trafficking protein (90 aa).

This sequence belongs to the Fe(2+)-trafficking protein family.

In terms of biological role, could be a mediator in iron transactions between iron acquisition and iron-requiring processes, such as synthesis and/or repair of Fe-S clusters in biosynthetic enzymes. This Haemophilus influenzae (strain 86-028NP) protein is Probable Fe(2+)-trafficking protein.